The following is a 1169-amino-acid chain: Polyamine-transporting ATPase 13A2 (1169 aa).

Over 1-44 (MSADSSLLMGSTPPSYGTLTTGTSIDPLSSSASSVRLSGYCGSP) the chain is Cytoplasmic. An intramembrane segment occupies 45–65 (WRAIGYHAAVWMLAGIPWLLF). The Cytoplasmic segment spans residues 66–225 (RWKPLWGVRL…ISIPVKSYLQ (160 aa)). A helical membrane pass occupies residues 226–246 (LLADEALNPYYGFQAFSIALW). Residues 247–250 (LADH) are Lumenal-facing. Residues 251 to 271 (YYWYALCIFLISAISICLALY) traverse the membrane as a helical segment. Topologically, residues 272-422 (KTRKQSLTLR…SFKFYKHSMK (151 aa)) are cytoplasmic. A helical membrane pass occupies residues 423-443 (FVAALSVLALLGTVYSIIILY). At 444–458 (RNRVPVREIVIRALD) the chain is on the lumenal side. A helical membrane pass occupies residues 459–479 (LVTVVVPPALPAAMTVCTLYA). Topologically, residues 480 to 919 (QSRLRTQGIF…REGRCSLDTS (440 aa)) are cytoplasmic. Asp-508 serves as the catalytic 4-aspartylphosphate intermediate. Asp-867 and Asp-871 together coordinate Mg(2+). Residues 920–940 (FSVFKYMALYSLTQFISVLIL) traverse the membrane as a helical segment. Residues 941–946 (YTINTN) lie on the Lumenal side of the membrane. Residues 947 to 967 (LGDLQFLAIDLVITTTVAVLM) form a helical membrane-spanning segment. Topologically, residues 968-993 (SRTGPALTLVRARPPGALLSVPVLGS) are cytoplasmic. Residues 994–1014 (LLLQVALVAGIQLGGYFLVIA) traverse the membrane as a helical segment. Residues 1015–1037 (QPWFVPLNRTVPAPDNLPNYENT) are Lumenal-facing. Asn-1022 carries N-linked (GlcNAc...) asparagine glycosylation. A helical transmembrane segment spans residues 1038-1058 (VVFSLSGFQYLILAAAVSKGA). At 1059–1069 (PFRQPLYTNVP) the chain is on the cytoplasmic side. Residues 1070–1090 (FLVALALLGSVLVGLILVPGL) form a helical membrane-spanning segment. Over 1091 to 1106 (LQGPLGLRNIVDSSFK) the chain is Lumenal. Residues 1107–1127 (LLLLGLVAFNFVGAFMLESVL) traverse the membrane as a helical segment. The Cytoplasmic segment spans residues 1128–1169 (DQCLPACLRWLRPKRASKKQFKRLQQELAEHPWPTLPVGSVR).

This sequence belongs to the cation transport ATPase (P-type) (TC 3.A.3) family. Type V subfamily. Interacts with MYCBP2; the interaction inhibits the ubiquitination of TSC2 by MYCBP2. Interacts with HDAC6; the interaction results in recruitment of HDAC6 to lysosomes to promote CTTN deacetylation. In terms of processing, autophosphorylated. Accumulates in an inactive autophosphorylated state and autophosphorylation is stimulated by phosphatidic acid and phosphatidylinositol 3,5-bisphosphate but not by Mn(2+) or Zn(2+). The presence of spermine results in a dose-dependent reduction in autophosphorylation.

The protein resides in the lysosome membrane. Its subcellular location is the late endosome membrane. The protein localises to the endosome. It localises to the multivesicular body membrane. It is found in the cytoplasmic vesicle. The protein resides in the autophagosome membrane. It catalyses the reaction spermidine(out) + ATP + H2O = spermidine(in) + ADP + phosphate + H(+). The enzyme catalyses spermine(out) + ATP + H2O = spermine(in) + ADP + phosphate + H(+). With respect to regulation, accumulates in an inactive autophosphorylated state. The presence of spermine results in a dose-dependent reduction in autophosphorylation. In terms of biological role, ATPase which acts as a lysosomal polyamine exporter with high affinity for spermine. Also stimulates cellular uptake of polyamines and protects against polyamine toxicity. Plays a role in intracellular cation homeostasis and the maintenance of neuronal integrity. Contributes to cellular zinc homeostasis. Confers cellular protection against Mn(2+) and Zn(2+) toxicity and mitochondrial stress. Required for proper lysosomal and mitochondrial maintenance. Regulates the autophagy-lysosome pathway through the control of SYT11 expression at both transcriptional and post-translational levels. Facilitates recruitment of deacetylase HDAC6 to lysosomes to deacetylate CTTN, leading to actin polymerization, promotion of autophagosome-lysosome fusion and completion of autophagy. Promotes secretion of exosomes as well as secretion of SCNA via exosomes. Plays a role in lipid homeostasis. This is Polyamine-transporting ATPase 13A2 from Mus musculus (Mouse).